The sequence spans 236 residues: uncharacterized protein (236 aa).

The Response regulatory domain occupies 3–116 (TCLIVDDELF…RLSKTLKRVR (114 aa)). Residue D54 is modified to 4-aspartylphosphate. Residues 135 to 235 (LPCYSGSKLK…LKSLKQLFGF (101 aa)) enclose the HTH LytTR-type domain.

This is an uncharacterized protein from Shewanella oneidensis (strain ATCC 700550 / JCM 31522 / CIP 106686 / LMG 19005 / NCIMB 14063 / MR-1).